Consider the following 1856-residue polypeptide: Autophagy-related protein 2 (1856 aa).

Disordered stretches follow at residues 123–167 (NTND…TGNK), 229–283 (LRTL…GNES), 309–328 (KSAASGIPGEVDNKATDKED), 395–428 (TKSRSAQRNEKFPQYTNDNDEIPEDQSESDDASH), 1157–1177 (LNGTENGSTSESSSQEASSLM), 1614–1647 (MLGGEGSSVRSPNLGGSDNRRNSNASDELPVEVA), and 1719–1741 (KLQPHTKGNHEGLTEEEEDEDED). Residues 137–147 (ASEDDDEDDID) are compositionally biased toward acidic residues. Residues 250 to 262 (KKQQGSDNDSPTD) are compositionally biased toward polar residues. Residues 270–280 (NDNDDDDDDYG) show a composition bias toward acidic residues. The span at 412-424 (DNDEIPEDQSESD) shows a compositional bias: acidic residues. A compositionally biased stretch (low complexity) spans 1157–1170 (LNGTENGSTSESSS). A compositionally biased stretch (polar residues) spans 1621 to 1639 (SVRSPNLGGSDNRRNSNAS). Residues 1732–1741 (TEEEEDEDED) show a composition bias toward acidic residues.

The protein belongs to the ATG2 family.

Its subcellular location is the preautophagosomal structure membrane. The protein localises to the endoplasmic reticulum membrane. The enzyme catalyses a 1,2-diacyl-sn-glycero-3-phosphocholine(in) = a 1,2-diacyl-sn-glycero-3-phosphocholine(out). It carries out the reaction a 1,2-diacyl-sn-glycero-3-phospho-L-serine(in) = a 1,2-diacyl-sn-glycero-3-phospho-L-serine(out). It catalyses the reaction a 1,2-diacyl-sn-glycero-3-phosphoethanolamine(in) = a 1,2-diacyl-sn-glycero-3-phosphoethanolamine(out). In terms of biological role, lipid transfer protein required for autophagosome completion and peroxisome degradation. Tethers the edge of the isolation membrane (IM) to the endoplasmic reticulum (ER) and mediates direct lipid transfer from ER to IM for IM expansion. ATG2/SPO72 binds to the ER exit site (ERES), which is the membrane source for autophagosome formation, using basic residues in its N-terminal region (NR) and to the expanding edge of the IM through its C-terminal region. The latter binding is assisted by an ATG18-PtdIns3P interaction. ATG2/SPO72 then extracts phospholipids from the membrane source using its NR and transfers them to ATG9 to the IM through its predicted beta-sheet-rich structure for membrane expansion. The chain is Autophagy-related protein 2 (SPO72) from Candida albicans (strain SC5314 / ATCC MYA-2876) (Yeast).